We begin with the raw amino-acid sequence, 172 residues long: Large ribosomal subunit protein uL10 (172 aa).

The protein belongs to the universal ribosomal protein uL10 family. In terms of assembly, part of the ribosomal stalk of the 50S ribosomal subunit. The N-terminus interacts with L11 and the large rRNA to form the base of the stalk. The C-terminus forms an elongated spine to which L12 dimers bind in a sequential fashion forming a multimeric L10(L12)X complex.

Functionally, forms part of the ribosomal stalk, playing a central role in the interaction of the ribosome with GTP-bound translation factors. The polypeptide is Large ribosomal subunit protein uL10 (Rhizobium rhizogenes (strain K84 / ATCC BAA-868) (Agrobacterium radiobacter)).